Consider the following 1112-residue polypeptide: MEKSSNRRFGVRTVAAIVAGLMVGGMCTAMTASAADDSAAGYSATAPVNLTRPATVPSMDGWTDGTGAWTLGEGTRVVSSDALAARAQSLASELTKFTDVDIKAATGSATGKDISLTLDASKKAELGDEGFKLNIGSKGLEVIGATDIGVFYGTRSVSQMLRQGQLTLPAGTVATKPKYKERGATLCACQINISTDWIDRFLSDMADLRLNYVLLEMKLKPEEDNTKKAATWSYYTRDDVKKFVKKANNYGIDVIPEINSPGHMNVWLENYPEYQLADNSGRKDPNKLDISNPEAVKFYKTLIDEYDGVFTTKYWHMGADEYMIGTSFDNYSKLKTFAEKQYGAGATPNDAFTGFINDIDKYVKAKGKQLRIWNDGIVNTKNVSLNKDIVIEYWYGAGRKPQELVQDGYTLMNATQALYWSRSAQVYKVNAARLYNNNWNVGTFDGGRQIDKNYDKLTGAKVSIWPDSSYFQTENEVEKEIFDGMRFISQMTWSDSRPWATWNDMKADIDKIGYPLDIREYDYTPVDAGIYDIPQLKSISKGPWELITTPDGYYQMKDTVSGKCLALFTGSKHLDVVTQVGARPELRNCADVSVGQDQRNTANERNTQKWQIRADKDGKYTISPALTQQRLAIATGNEQNIDLETHRPAAGTVAQFPADLVSDNALFTLTGHMGMSATVDSKTVNPASPSKITVKVRAASNANTGDVTVTPVVPEGWEIKPGSVSLKSIPAGKAAIAYFNVVNTTGTGDATVQFKLTNTKTGEELGTTSVALTGSLTKDVEASDYAASSQETTGEHAPVGNAFDKNANTFWHSKYSNPSANLPHWLAFKASPGEGNKIAAITHLYRQDKLNGPAKNVAVYVVAASDANSVADVTNWGEPVATAEFPYTKELQTIALPNTIPSGDVYVKFQINDAWGLTETSAGVTWAAVAELAATAKATPVELTEPEQPKDNPEVTETPEATGVTVSGDGVANGALSLKKGTTAQLTAKVAPDDADQAVTWASSDDKVVTVDKTGKVTAVAKGVAKVTATTANGKSASVTVTVTEDSEVPGPTGPTEPTKPGTEKPTTKPTTKPNDGKLSATGADTAVLATIAALFALAGGAVVAVRRRSVR.

The signal sequence occupies residues 1-34 (MEKSSNRRFGVRTVAAIVAGLMVGGMCTAMTASA). Cys187 and Cys189 are joined by a disulfide. Residues Gln190, Glu216, Asn259, Asp320, Glu321, Tyr419, and Asp467 each contribute to the beta-D-galactosyl-(1-&gt;3)-N-acetyl-D-glucosamine site. Catalysis depends on Glu321, which acts as the Proton donor/acceptor. A disulfide bridge connects residues Cys564 and Cys589. The interval 938 to 969 (ATPVELTEPEQPKDNPEVTETPEATGVTVSGD) is disordered. The BIG2 domain occupies 975 to 1041 (ALSLKKGTTA…ANGKSASVTV (67 aa)). Residues 1044–1061 (TEDSEVPGPTGPTEPTKP) are compositionally biased toward low complexity. Residues 1044–1081 (TEDSEVPGPTGPTEPTKPGTEKPTTKPTTKPNDGKLSA) are disordered. Residues 1086 to 1106 (TAVLATIAALFALAGGAVVAV) traverse the membrane as a helical segment.

It belongs to the glycosyl hydrolase 20 family.

Its subcellular location is the cell membrane. The catalysed reaction is beta-D-Gal-(1-&gt;3)-beta-D-GlcNAc-(1-&gt;3)-beta-D-Gal-(1-&gt;4)-D-Glc + H2O = beta-D-galactosyl-(1-&gt;3)-N-acetyl-D-glucosamine + lactose. Its function is as follows. Present in the infant gut, this enzyme is involved in the assimilation of type-1 human milk oligosaccharides (HMOs). It hydrolyzes via a retaining mechanism the beta-D-GlcNAc-(1-&gt;3)-beta-D-Gal linkage in lacto-N-tetraose (LNT or beta-D-Gal-(1-&gt;3)-beta-D-GlcNAc-(1-&gt;3)-beta-D-Gal-(1-&gt;4)-D-Glc), an abundant HMO unique to human breast milk, releasing lacto-N-biose (LNB or beta-D-Gal-(1-&gt;3)-D-GlcNAc) and lactose. Is a key enzymatic factor for growth and proliferation of B.bifidum in the gut ecosystem of breast-fed infants. Has substrate preference for unmodified beta-linked LNB since it does not hydrolyze the fucosylated forms of lacto-N-tetraose (lacto-N-fucopentaose I and II) or lacto-N-neotetraose. Is also able to display transglycosylation activity in vitro. This chain is Lacto-N-biosidase, found in Bifidobacterium bifidum (strain DSM 20082 / JCM 1254 / BCRC 11844 / KCTC 3440 / E319f (Variant a)).